The primary structure comprises 380 residues: MVSARALLWAICVLRVALATVYFQEEFLDGERWRNRWVQSTNDSQFGHFRVSSGKFYGHKEKDKGLQTTQNSRFYAISASFKPFSNKGKTLVIQYTVKHEQKMDCGGGYIKVFPSDLDQKKMNGKSQYYIMFGPDICGFDIKKVHVILYFKNQYHENKKPIRCKVDGFTHLYTLILRPDLSYEVKVDGQSIESGSIEYDWNLTSLRKTEKTSLDSRDWDQVEGSKVQDWEKHFLDAGASKPSDWNSELDGDWLQKPPYEDGLKAEGIDKDVWLHQKMRPAGYLTQYDLSEFENIGAIGLELWQVRSGTIFDNFLITDDEEYAEKFGKATWGETKGPEKEMDAIQAKEEVKKAREEDEEDLLMGKFHRHNHFSRFHRQGEL.

The signal sequence occupies residues 1 to 19 (MVSARALLWAICVLRVALA). An N-domain region spans residues 20-197 (TVYFQEEFLD…GQSIESGSIE (178 aa)). An N-linked (GlcNAc...) asparagine glycan is attached at asparagine 42. Positions 109, 111, 128, and 135 each coordinate an alpha-D-glucoside. Cysteine 137 and cysteine 163 are disulfide-bonded. 7 tandem repeats follow at residues 191 to 202 (IESGSIEYDWNL), 209 to 220 (EKTSLDSRDWDQ), 222 to 231 (EGSKVQDWEK), 235 to 246 (DAGASKPSDWNS), 250 to 256 (GDWLQKP), 260 to 268 (DGLKAEGID), and 270 to 280 (DVWLHQKMRPA). Residues 191-246 (IESGSIEYDWNLTSLRKTEKTSLDSRDWDQVEGSKVQDWEKHFLDAGASKPSDWNS) are 4 X approximate repeats. The P-domain stretch occupies residues 198 to 291 (YDWNLTSLRK…YLTQYDLSEF (94 aa)). Residue asparagine 201 is glycosylated (N-linked (GlcNAc...) asparagine). Positions 250 to 280 (GDWLQKPPYEDGLKAEGIDKDVWLHQKMRPA) are 3 X approximate repeats. The segment at 292–380 (ENIGAIGLEL…FSRFHRQGEL (89 aa)) is C-domain. Glutamate 300 serves as a coordination point for an alpha-D-glucoside. The short motif at 377-380 (QGEL) is the Prevents secretion from ER element.

Belongs to the calreticulin family. In terms of assembly, component of an EIF2 complex at least composed of CELF1/CUGBP1, CALR, CALR3, EIF2S1, EIF2S2, HSP90B1 and HSPA5. Testis specific, absent in mature sperm.

It localises to the endoplasmic reticulum lumen. Functionally, CALR3 capacity for calcium-binding may be absent or much lower than that of CALR. During spermatogenesis, may act as a lectin-independent chaperone for specific client proteins such as ADAM3. Required for sperm fertility. The chain is Calreticulin-3 (Calr3) from Mus musculus (Mouse).